A 516-amino-acid polypeptide reads, in one-letter code: Squalene epoxidase 4 (516 aa).

Helical transmembrane passes span 2–22 (TYAWLWTLLAFVLTWMVFHLI) and 43–63 (ATDVIIVGAGVAGASLAYALA). FAD is bound by residues 53–54 (VA), 73–74 (ER), R81, R153, V169, D335, and M348. Residues 435–455 (ILGGMNPHPLTLVLHLVAITL) form a helical membrane-spanning segment.

The protein belongs to the squalene monooxygenase family. Requires FAD as cofactor. Expressed mainly in seedlings and inflorescences.

The protein localises to the membrane. The enzyme catalyses squalene + reduced [NADPH--hemoprotein reductase] + O2 = (S)-2,3-epoxysqualene + oxidized [NADPH--hemoprotein reductase] + H2O + H(+). Its pathway is terpene metabolism; lanosterol biosynthesis; lanosterol from farnesyl diphosphate: step 2/3. Catalyzes the stereospecific oxidation of squalene to (S)-2,3-epoxysqualene, and is considered to be a rate-limiting enzyme in steroid biosynthesis. The polypeptide is Squalene epoxidase 4 (SQE4) (Arabidopsis thaliana (Mouse-ear cress)).